The primary structure comprises 376 residues: N-acetyldiaminopimelate deacetylase (376 aa).

Asp-69 is a catalytic residue. Catalysis depends on Glu-128, which acts as the Proton acceptor.

Belongs to the peptidase M20A family. N-acetyldiaminopimelate deacetylase subfamily.

It catalyses the reaction N-acetyl-(2S,6S)-2,6-diaminopimelate + H2O = (2S,6S)-2,6-diaminopimelate + acetate. It functions in the pathway amino-acid biosynthesis; L-lysine biosynthesis via DAP pathway; LL-2,6-diaminopimelate from (S)-tetrahydrodipicolinate (acetylase route): step 3/3. Catalyzes the conversion of N-acetyl-diaminopimelate to diaminopimelate and acetate. The sequence is that of N-acetyldiaminopimelate deacetylase from Streptococcus pneumoniae (strain Hungary19A-6).